We begin with the raw amino-acid sequence, 217 residues long: Small ribosomal subunit protein uS3 (217 aa).

In terms of domain architecture, KH type-2 spans 38–106; that stretch reads IRKFIDNELK…KVHINVIEIK (69 aa).

The protein belongs to the universal ribosomal protein uS3 family. In terms of assembly, part of the 30S ribosomal subunit. Forms a tight complex with proteins S10 and S14.

In terms of biological role, binds the lower part of the 30S subunit head. Binds mRNA in the 70S ribosome, positioning it for translation. This Staphylococcus haemolyticus (strain JCSC1435) protein is Small ribosomal subunit protein uS3.